The primary structure comprises 278 residues: ABC transporter I family member 11, chloroplastic (278 aa).

Residues 1–49 (MAVSTFSSPTPVFGIAEPPASFSSTAIGWKQPLRFRRTKKPRVISCDYS) constitute a chloroplast transit peptide. The region spanning 51 to 278 (IEVRDVCYRP…GVLVAERPPL (228 aa)) is the ABC transporter domain. 85 to 92 (GKSGSGKT) lines the ATP pocket.

Belongs to the ABC transporter superfamily. ABCI family.

It localises to the plastid. The protein localises to the chloroplast. This chain is ABC transporter I family member 11, chloroplastic (ABCI11), found in Arabidopsis thaliana (Mouse-ear cress).